Consider the following 100-residue polypeptide: Large ribosomal subunit protein uL23 (100 aa).

This sequence belongs to the universal ribosomal protein uL23 family. Part of the 50S ribosomal subunit. Contacts protein L29, and trigger factor when it is bound to the ribosome.

Functionally, one of the early assembly proteins it binds 23S rRNA. One of the proteins that surrounds the polypeptide exit tunnel on the outside of the ribosome. Forms the main docking site for trigger factor binding to the ribosome. The polypeptide is Large ribosomal subunit protein uL23 (Shigella dysenteriae serotype 1 (strain Sd197)).